We begin with the raw amino-acid sequence, 463 residues long: Myocyte-specific enhancer factor 2C (463 aa).

One can recognise an MADS-box domain in the interval 3-57 (RKKIQITRIMDERNRQVTFTKRKFGLMKKAYELSVLCDCEIALIIFNSTNKLFQY). Residue lysine 4 is modified to N6-acetyllysine. The segment at residues 58–86 (ASTDMDKVLLKYTEYNEPHESRTNSDIVE) is a DNA-binding region (mef2-type). Serine 59 carries the post-translational modification Phosphoserine; by CK2. 2 positions are modified to phosphoserine: serine 98 and serine 104. Lysine 114 and lysine 117 each carry N6-acetyllysine. Residues 178–223 (NSMSPGVTHRPPSAGNTGGLMGGDLTSGAGTSAGNGYGNPRNSPGL) are disordered. Serine 220 and serine 226 each carry phosphoserine. 2 positions are modified to N6-acetyllysine: lysine 232 and lysine 237. Serine 238 is subject to Phosphoserine. N6-acetyllysine is present on residues lysine 250 and lysine 262. 2 positions are modified to phosphothreonine; by MAPK7 and MAPK14: threonine 283 and threonine 290. Residues 358–389 (ACTSTHLSQSSNLSLPSTQSLNIKSEPVSPPR) are transcription repressor. The span at 365-380 (SQSSNLSLPSTQSLNI) shows a compositional bias: polar residues. The segment at 365–463 (SQSSNLSLPS…RMRLSEGWAT (99 aa)) is disordered. Lysine 381 participates in a covalent cross-link: Glycyl lysine isopeptide (Lys-Gly) (interchain with G-Cter in SUMO). At serine 386 the chain carries Phosphoserine; by CDK5. Serine 409 carries the post-translational modification Phosphoserine; by MAPK7. Residues 409-422 (SPVDSLSSCSSSYD) show a composition bias toward low complexity. The segment covering 423 to 433 (GSDREDHRNEF) has biased composition (basic and acidic residues). Serine 435 bears the Phosphoserine mark.

As to quaternary structure, forms a complex with class II HDACs in undifferentiating cells. On myogenic differentiation, HDACs are released into the cytoplasm allowing MEF2s to interact with other proteins for activation. Interacts with EP300 in differentiating cells; the interaction acetylates MEF2C leading to increased DNA binding and activation. Interacts with HDAC7 and CARM1. Interacts with HDAC4, HDAC7 and HDAC9; the interaction with HDACs represses transcriptional activity. Interacts with LPIN1. Interacts with MYOCD. Interacts with AKAP13. Interacts with FOXK1; the interaction inhibits MEF2C transactivation activity. Interacts (via N-terminus) with HABP4; this interaction decreases DNA-binding activity of MEF2C in myocardial cells in response to mechanical stress. Interacts with JPH2; interaction specifically takes place with the Junctophilin-2 N-terminal fragment cleavage product of JPH2. Interacts (via MADS box) with SOX18. Interacts with PHF7; the interaction promotes MEF2C binding to its transcription targets. In terms of processing, phosphorylated on Ser-59; which enhances DNA binding activity. Phosphorylated on Ser-386; which is required for Lys-381 sumoylation and inhibits transcriptional activity. Acetylated by p300 on several sites in diffentiating myocytes. Acetylation on Lys-4 increases DNA binding and transactivation. Post-translationally, sumoylated on Lys-381 with SUMO2 but not SUMO1; which represses transcriptional activity. In terms of processing, proteolytically cleaved in cerebellar granule neurons on several sites by caspase 3 and caspase 7 following neurotoxicity. Preferentially cleaves the CDK5-mediated hyperphosphorylated form which leads to neuron apoptosis and transcriptional inactivation.

It is found in the nucleus. The protein resides in the cytoplasm. The protein localises to the sarcoplasm. Transcription activator which binds specifically to the MEF2 element present in the regulatory regions of many muscle-specific genes. Controls cardiac morphogenesis and myogenesis, and is also involved in vascular development. Enhances transcriptional activation mediated by SOX18. Plays an essential role in hippocampal-dependent learning and memory by suppressing the number of excitatory synapses and thus regulating basal and evoked synaptic transmission. Crucial for normal neuronal development, distribution, and electrical activity in the neocortex. Necessary for proper development of megakaryocytes and platelets and for bone marrow B-lymphopoiesis. Required for B-cell survival and proliferation in response to BCR stimulation, efficient IgG1 antibody responses to T-cell-dependent antigens and for normal induction of germinal center B-cells. May also be involved in neurogenesis and in the development of cortical architecture. The sequence is that of Myocyte-specific enhancer factor 2C from Sus scrofa (Pig).